A 347-amino-acid polypeptide reads, in one-letter code: NADH-ubiquinone oxidoreductase chain 2 (347 aa).

The next 11 helical transmembrane spans lie at 1–21, 25–45, 60–80, 96–116, 127–147, 149–169, 178–198, 202–222, 239–259, 274–294, and 326–346; these read MNPM…SIVM, HWFL…PVLM, FLTQ…NLMF, MLLT…FWVP, GLIL…QIYP, INTN…GWGG, IMAY…IYNP, LLNL…LIFA, IITI…PLTG, NSVI…FFYM, and MMPL…FILL.

This sequence belongs to the complex I subunit 2 family. In terms of assembly, core subunit of respiratory chain NADH dehydrogenase (Complex I) which is composed of 45 different subunits. Interacts with TMEM242.

The protein localises to the mitochondrion inner membrane. The catalysed reaction is a ubiquinone + NADH + 5 H(+)(in) = a ubiquinol + NAD(+) + 4 H(+)(out). In terms of biological role, core subunit of the mitochondrial membrane respiratory chain NADH dehydrogenase (Complex I) that is believed to belong to the minimal assembly required for catalysis. Complex I functions in the transfer of electrons from NADH to the respiratory chain. The immediate electron acceptor for the enzyme is believed to be ubiquinone. This is NADH-ubiquinone oxidoreductase chain 2 from Suncus etruscus (Etruscan shrew).